The sequence spans 131 residues: Large ribosomal subunit protein uL14m (131 aa).

It belongs to the universal ribosomal protein uL14 family. As to quaternary structure, component of the mitochondrial large ribosomal subunit (mt-LSU). Mature N.crassa 74S mitochondrial ribosomes consist of a small (37S) and a large (54S) subunit. The 37S small subunit contains a 16S ribosomal RNA (16S mt-rRNA) and 32 different proteins. The 54S large subunit contains a 23S rRNA (23S mt-rRNA) and 42 different proteins.

It localises to the mitochondrion. Its function is as follows. Component of the mitochondrial ribosome (mitoribosome), a dedicated translation machinery responsible for the synthesis of mitochondrial genome-encoded proteins, including at least some of the essential transmembrane subunits of the mitochondrial respiratory chain. The mitoribosomes are attached to the mitochondrial inner membrane and translation products are cotranslationally integrated into the membrane. The sequence is that of Large ribosomal subunit protein uL14m (mrpl38) from Neurospora crassa (strain ATCC 24698 / 74-OR23-1A / CBS 708.71 / DSM 1257 / FGSC 987).